The primary structure comprises 315 residues: MIRIGTRGSLLATTQAALVRDALIANGHPAELVIVNTAGDQSSASIDSLGVGVFTTALRAAIEEGCVDAAVHSYKDLPTADDPRFTVAAIPPRNDPRDAVVTRDELVLAELPAGSLVGTSSPRRAAQLRALGLGLEIRPLRGNLDTRLNRVSSGDLDAIVVARAGLARLGRLDEVTETLDPVQMVPAPAQGAIAVECRAGDSRLVAVLAALDDADTRAAVTAERVLLAELEAGCSAPVGAIAQVVESIDGEGRVFEELSLRGCVAALDGSDVIRASGISTSGRASELGLAVAVELFELGARELMWGARSDRARGS.

Cys-234 is modified (S-(dipyrrolylmethanemethyl)cysteine).

This sequence belongs to the HMBS family. In terms of assembly, monomer. The cofactor is dipyrromethane.

It carries out the reaction 4 porphobilinogen + H2O = hydroxymethylbilane + 4 NH4(+). It functions in the pathway porphyrin-containing compound metabolism; protoporphyrin-IX biosynthesis; coproporphyrinogen-III from 5-aminolevulinate: step 2/4. Its function is as follows. Tetrapolymerization of the monopyrrole PBG into the hydroxymethylbilane pre-uroporphyrinogen in several discrete steps. The protein is Porphobilinogen deaminase (hemC) of Mycobacterium leprae (strain TN).